The sequence spans 359 residues: Putative nucleotidyltransferase MAB21L1 (359 aa).

Residues 23-24 (RK) and 63-66 (YEGL) each bind a ribonucleoside 5'-triphosphate. Mg(2+) is bound by residues Glu73 and Glu75. A ribonucleoside 5'-triphosphate contacts are provided by residues Lys248 and 252–255 (SILK).

This sequence belongs to the mab-21 family. Monomer. Homodecamer; composed of 2 back to back homopentamers. The protein may exist as monomer in solution and oiligomerizes upon ligand binding.

The protein resides in the nucleus. Its function is as follows. Putative nucleotidyltransferase required for several aspects of embryonic development including normal development of the eye. It is unclear whether it displays nucleotidyltransferase activity in vivo. Binds single-stranded RNA (ssRNA). In Bos taurus (Bovine), this protein is Putative nucleotidyltransferase MAB21L1 (MAB21L1).